A 177-amino-acid chain; its full sequence is Large ribosomal subunit protein uL6 (177 aa).

The protein belongs to the universal ribosomal protein uL6 family. Part of the 50S ribosomal subunit.

In terms of biological role, this protein binds to the 23S rRNA, and is important in its secondary structure. It is located near the subunit interface in the base of the L7/L12 stalk, and near the tRNA binding site of the peptidyltransferase center. This is Large ribosomal subunit protein uL6 from Bradyrhizobium sp. (strain BTAi1 / ATCC BAA-1182).